Consider the following 189-residue polypeptide: Elongation factor P (189 aa).

It belongs to the elongation factor P family.

Its subcellular location is the cytoplasm. Its pathway is protein biosynthesis; polypeptide chain elongation. Involved in peptide bond synthesis. Stimulates efficient translation and peptide-bond synthesis on native or reconstituted 70S ribosomes in vitro. Probably functions indirectly by altering the affinity of the ribosome for aminoacyl-tRNA, thus increasing their reactivity as acceptors for peptidyl transferase. In Pseudomonas entomophila (strain L48), this protein is Elongation factor P.